We begin with the raw amino-acid sequence, 373 residues long: Protodeoxyviolaceinate monooxygenase (373 aa).

2–20 (KILVIGAGPAGLVFASQLK) provides a ligand contact to FAD.

FAD is required as a cofactor.

The enzyme catalyses protodeoxyviolaceinate + NADH + O2 + H(+) = protoviolaceinate + NAD(+) + H2O. It carries out the reaction protodeoxyviolaceinate + NADPH + O2 + H(+) = protoviolaceinate + NADP(+) + H2O. The protein operates within pigment biosynthesis; violacein biosynthesis. Functionally, catalyzes the oxygenation of the 6-position of protodeoxyviolaceinate to form proviolacein. This chain is Protodeoxyviolaceinate monooxygenase (vioD), found in Chromobacterium violaceum (strain ATCC 12472 / DSM 30191 / JCM 1249 / CCUG 213 / NBRC 12614 / NCIMB 9131 / NCTC 9757 / MK).